Reading from the N-terminus, the 140-residue chain is uncharacterized protein (140 aa).

The next 2 helical transmembrane spans lie at 4-21 (ILKI…YLFG) and 26-48 (LVKV…SGYL).

It belongs to the bacteriophage holin family. Cp-1 holin subfamily.

It is found in the cell membrane. This is an uncharacterized protein from Listeria innocua serovar 6a (strain ATCC BAA-680 / CLIP 11262).